Here is a 231-residue protein sequence, read N- to C-terminus: Ribonuclease HII (231 aa).

The RNase H type-2 domain occupies 23-214; it reads GPVAGVDEAG…VAKAHREWAL (192 aa). Residues Asp-29, Glu-30, and Asp-123 each coordinate a divalent metal cation.

Belongs to the RNase HII family. It depends on Mn(2+) as a cofactor. The cofactor is Mg(2+).

The protein localises to the cytoplasm. It catalyses the reaction Endonucleolytic cleavage to 5'-phosphomonoester.. In terms of biological role, endonuclease that specifically degrades the RNA of RNA-DNA hybrids. The chain is Ribonuclease HII from Corynebacterium efficiens (strain DSM 44549 / YS-314 / AJ 12310 / JCM 11189 / NBRC 100395).